Consider the following 426-residue polypeptide: Enolase (426 aa).

A (2R)-2-phosphoglycerate-binding site is contributed by glutamine 163. Glutamate 205 serves as the catalytic Proton donor. Mg(2+) contacts are provided by aspartate 242, glutamate 283, and aspartate 310. (2R)-2-phosphoglycerate is bound by residues lysine 335, arginine 364, serine 365, and lysine 386. The Proton acceptor role is filled by lysine 335.

The protein belongs to the enolase family. Mg(2+) serves as cofactor.

The protein resides in the cytoplasm. The protein localises to the secreted. It is found in the cell surface. It carries out the reaction (2R)-2-phosphoglycerate = phosphoenolpyruvate + H2O. It functions in the pathway carbohydrate degradation; glycolysis; pyruvate from D-glyceraldehyde 3-phosphate: step 4/5. Functionally, catalyzes the reversible conversion of 2-phosphoglycerate (2-PG) into phosphoenolpyruvate (PEP). It is essential for the degradation of carbohydrates via glycolysis. The polypeptide is Enolase (Clavibacter sepedonicus (Clavibacter michiganensis subsp. sepedonicus)).